Consider the following 94-residue polypeptide: Integration host factor subunit beta (94 aa).

The protein belongs to the bacterial histone-like protein family. In terms of assembly, heterodimer of an alpha and a beta chain.

Functionally, this protein is one of the two subunits of integration host factor, a specific DNA-binding protein that functions in genetic recombination as well as in transcriptional and translational control. The sequence is that of Integration host factor subunit beta from Azoarcus sp. (strain BH72).